Reading from the N-terminus, the 414-residue chain is Translation initiation factor 2 subunit gamma (414 aa).

The tr-type G domain maps to 7–204 (QPEVNIGLVG…ALQTEIATPD (198 aa)). A G1 region spans residues 16-23 (GHVDHGKT). 4 residues coordinate Mg(2+): Asp-19, Thr-23, Gly-44, and Ser-46. A GTP-binding site is contributed by 19-24 (DHGKTT). The tract at residues 44–48 (GISIR) is G2. Positions 91–94 (DAPG) are G3. GTP-binding positions include 147 to 150 (NKVD) and 182 to 184 (SAE). Residues 147 to 150 (NKVD) form a G4 region. A G5 region spans residues 182 to 184 (SAE).

It belongs to the TRAFAC class translation factor GTPase superfamily. Classic translation factor GTPase family. EIF2G subfamily. Heterotrimer composed of an alpha, a beta and a gamma chain. It depends on Mg(2+) as a cofactor.

The enzyme catalyses GTP + H2O = GDP + phosphate + H(+). In terms of biological role, eIF-2 functions in the early steps of protein synthesis by forming a ternary complex with GTP and initiator tRNA. The polypeptide is Translation initiation factor 2 subunit gamma (Halobacterium salinarum (strain ATCC 29341 / DSM 671 / R1)).